The primary structure comprises 115 residues: DNA-binding protein TV0008 (115 aa).

The segment at Leu-18–Ile-37 is disordered.

It belongs to the PDCD5 family.

The protein is DNA-binding protein TV0008 of Thermoplasma volcanium (strain ATCC 51530 / DSM 4299 / JCM 9571 / NBRC 15438 / GSS1).